Consider the following 300-residue polypeptide: MEEPLLHAILGLVLLLSTRTDASAARSKKGPIKEVVMDMAPHSFDDQYQGCIDLMEAELQELNRTEFANETFAEGWRSATEEWQRRWGRVSSPMVLRQDQAIAVLAYTMEGELYRVFNNATLTAGRSRQHYLSSYPFKTLHFLLSRALHTLQESQTQPCHNVFRGVRGTRFTAQQGTVVRFGQFTSSSLQKKVAEFFGLDTFFSVETCYGVPIKDLSTFPGEDEVLIPPFEQFRVTNSTYTAGRSFIQLRSQGKSSTYNCEFVKEKRCKERPCAFSADKSSPLPRSPWPGWAPLAAPHSH.

The signal sequence occupies residues 1–22 (MEEPLLHAILGLVLLLSTRTDA). Cystine bridges form between C51-C260 and C159-C208. The region spanning 70–256 (ETFAEGWRSA…IQLRSQGKSS (187 aa)) is the TR mART core domain. Positions 107, 164, and 183 each coordinate NAD(+). The active site involves R164. S186 is an active-site residue. Position 217 (S217) interacts with NAD(+). The active site involves E224. The disordered stretch occupies residues 276–300 (SADKSSPLPRSPWPGWAPLAAPHSH).

Belongs to the Arg-specific ADP-ribosyltransferase family.

It carries out the reaction L-arginyl-[protein] + NAD(+) = N(omega)-(ADP-D-ribosyl)-L-arginyl-[protein] + nicotinamide + H(+). This Gallus gallus (Chicken) protein is Erythroblast NAD(P)(+)--arginine ADP-ribosyltransferase (MADPRT).